The chain runs to 484 residues: Monocarboxylate transporter 2 (484 aa).

The Cytoplasmic portion of the chain corresponds to 1–16; the sequence is MPSETAVPPPHPIPPD. Residues 17–37 form a helical membrane-spanning segment; the sequence is GGWGWVVVGAAFISIGFSYAF. Residues 38 to 60 are Extracellular-facing; the sequence is PKAVTVFFKDIQQIFQASYSEIA. Residues 61–81 form a helical membrane-spanning segment; it reads WISSIMLAVMYAGGPISSVLV. The Cytoplasmic portion of the chain corresponds to 82–87; the sequence is NNYGSR. A helical transmembrane segment spans residues 88–108; sequence PVVIIGGLLCCTGMILASFSN. Residues 109–116 lie on the Extracellular side of the membrane; sequence SVLELYLT. A helical membrane pass occupies residues 117 to 137; that stretch reads IGFIGGLGLAFNLQPALTIIG. At 138-144 the chain is on the cytoplasmic side; that stretch reads KYFYRRR. A helical membrane pass occupies residues 145 to 165; that stretch reads PMANGLAMAGSPVFLSSLAPF. Over 166–174 the chain is Extracellular; it reads NQYLFNSYG. The helical transmembrane segment at 175–195 threads the bilayer; the sequence is WKGSFLILGGIFLHSCVAGCL. The Cytoplasmic segment spans residues 196-245; sequence MRPVQTSPRKSKSKSKVGSRQDGSMKKASKVSTAEKINRFLDFSLFKHRG. The tract at residues 201 to 224 is disordered; the sequence is TSPRKSKSKSKVGSRQDGSMKKAS. The helical transmembrane segment at 246–266 threads the bilayer; the sequence is FLIYLSGNVIMFLGFFAPIIF. Residues 267–282 lie on the Extracellular side of the membrane; it reads LAPYAKDKGVDEYNAA. A helical membrane pass occupies residues 283–303; it reads LLLSVMAFVDMFARPTGGLIA. The Cytoplasmic segment spans residues 304-311; it reads NSKLIRPR. The helical transmembrane segment at 312–332 threads the bilayer; that stretch reads IQYFFSFAIVFTGICHLLCPL. Residues 333 to 337 lie on the Extracellular side of the membrane; it reads ADTYP. The chain crosses the membrane as a helical span at residues 338-358; that stretch reads ALVVYSIFFGYGFGSVSSVLF. The Cytoplasmic portion of the chain corresponds to 359–372; sequence ETLMDLVGPARFSS. Residues 373–393 traverse the membrane as a helical segment; that stretch reads AVGLATIVECCPVLLGPPLAG. Topologically, residues 394–405 are extracellular; the sequence is KLVDKTKDYKYM. A helical membrane pass occupies residues 406–426; the sequence is YIASGTIVVISGIYLFIGNAI. Topologically, residues 427–484 are cytoplasmic; sequence NYRLLAKERKREKARKKKSATHPSRESEALSRSKQDDVSVKVSNPHNSPSDRERESNI. Residues 437–484 are disordered; sequence REKARKKKSATHPSRESEALSRSKQDDVSVKVSNPHNSPSDRERESNI. Composition is skewed to basic and acidic residues over residues 449-465 and 475-484; these read PSRESEALSRSKQDDVS and PSDRERESNI.

The protein belongs to the major facilitator superfamily. Monocarboxylate porter (TC 2.A.1.13) family. Homodimer. Interacts with GRID2IP. Interacts with EMB; interaction mediates SLC16A7 targeting to the plasma membrane. Interacts with isoform 2 of BSG. As to expression, abundant on the surface of hepatocytes. Present on parietal cells of the oxyntic gland of the stomach, on the basolateral surface of epithelial cells in the collecting ducts of the kidney, on sperm tails throughout the epididymis. Expressed in mitochondria-rich skeletal muscle fibers and cardiac myocytes (at protein level).

Its subcellular location is the cell membrane. The protein resides in the basolateral cell membrane. It is found in the cytoplasm. It carries out the reaction pyruvate(out) + H(+)(out) = pyruvate(in) + H(+)(in). It catalyses the reaction 3-methyl-2-oxobutanoate(out) + H(+)(out) = 3-methyl-2-oxobutanoate(in) + H(+)(in). The enzyme catalyses (S)-lactate(in) + H(+)(in) = (S)-lactate(out) + H(+)(out). The catalysed reaction is acetoacetate(out) + H(+)(out) = acetoacetate(in) + H(+)(in). It carries out the reaction (R)-3-hydroxybutanoate(out) + H(+)(out) = (R)-3-hydroxybutanoate(in) + H(+)(in). It catalyses the reaction 4-methyl-2-oxopentanoate(out) + H(+)(out) = 4-methyl-2-oxopentanoate(in) + H(+)(in). The enzyme catalyses (S)-3-hydroxybutanoate(out) + H(+)(out) = (S)-3-hydroxybutanoate(in) + H(+)(in). Transport activity exhibits steep dependence on substrate concentration. Substrate concentration sensitivity of SLC16A7 arises from the strong inter-subunit cooperativity of the SLC16A7 dimer during transport. Inhibited by AR-C155858. Functionally, proton-coupled monocarboxylate symporter. Catalyzes the rapid transport across the plasma membrane of monocarboxylates such as L-lactate, pyruvate and ketone bodies, acetoacetate, beta-hydroxybutyrate and acetate. Dimerization is functionally required and both subunits work cooperatively in transporting substrate. The polypeptide is Monocarboxylate transporter 2 (SLC16A7) (Mesocricetus auratus (Golden hamster)).